Here is a 371-residue protein sequence, read N- to C-terminus: Bifunctional enzyme IspD/IspF (371 aa).

The interval 1-214 (MNSCFIILAG…NSDIKFNNLI (214 aa)) is 2-C-methyl-D-erythritol 4-phosphate cytidylyltransferase. Positions 215-371 (KFGIGFDVHR…EVIASVIKND (157 aa)) are 2-C-methyl-D-erythritol 2,4-cyclodiphosphate synthase. A divalent metal cation contacts are provided by Asp221 and His223. 4-CDP-2-C-methyl-D-erythritol 2-phosphate contacts are provided by residues 221-223 (DVH) and 247-248 (HS). His255 contacts a divalent metal cation. Residues 269–271 (DIG), 274–278 (FSDKN), and Lys355 each bind 4-CDP-2-C-methyl-D-erythritol 2-phosphate.

The protein in the N-terminal section; belongs to the IspD/TarI cytidylyltransferase family. IspD subfamily. It in the C-terminal section; belongs to the IspF family. A divalent metal cation serves as cofactor.

It catalyses the reaction 2-C-methyl-D-erythritol 4-phosphate + CTP + H(+) = 4-CDP-2-C-methyl-D-erythritol + diphosphate. The enzyme catalyses 4-CDP-2-C-methyl-D-erythritol 2-phosphate = 2-C-methyl-D-erythritol 2,4-cyclic diphosphate + CMP. The protein operates within isoprenoid biosynthesis; isopentenyl diphosphate biosynthesis via DXP pathway; isopentenyl diphosphate from 1-deoxy-D-xylulose 5-phosphate: step 2/6. Its pathway is isoprenoid biosynthesis; isopentenyl diphosphate biosynthesis via DXP pathway; isopentenyl diphosphate from 1-deoxy-D-xylulose 5-phosphate: step 4/6. Its function is as follows. Bifunctional enzyme that catalyzes the formation of 4-diphosphocytidyl-2-C-methyl-D-erythritol from CTP and 2-C-methyl-D-erythritol 4-phosphate (MEP) (IspD), and catalyzes the conversion of 4-diphosphocytidyl-2-C-methyl-D-erythritol 2-phosphate (CDP-ME2P) to 2-C-methyl-D-erythritol 2,4-cyclodiphosphate (ME-CPP) with a corresponding release of cytidine 5-monophosphate (CMP) (IspF). The chain is Bifunctional enzyme IspD/IspF from Pelagibacter ubique (strain HTCC1062).